The chain runs to 1171 residues: MNTLPVVSLTASSSFKFFHFPSLHRSLSHSPNFSFTKSLILNPNHLSFKSTLNSLSPSQSQLYEEEDDEEEEEEDEDDDDEAADEYDNISDEIRNSDDDDDDEETEFSVDLPTESARERVEFRWQRVEKLRSLVRDFGVEMIDIDELISIYDFRIDKFQRLAIEAFLRGSSVVVSAPTSSGKTLIAEAAAVSTVAKGRRLFYTTPLKALSNQKFREFRETFGDDNVGLLTGDSAINKDAQIVIMTTEILRNMLYQSVGMASSGTGLFHVDAIVLDEVHYLSDISRGTVWEEIVIYCPKEVQLICLSATVANPDELAGWIGEIHGKTELVTSTRRPVPLTWYFSTKHSLLPLLDEKGINVNRKLSLNYLQLSASEARFRDDDDGYRKRRSKKRGGDTSYNNLVNVTDYPLSKNEINKIRRSQVPQISDTLWHLQGKNMLPAIWFIFNRRGCDAAVQYVENFQLLDDCEKSEVELALKKFRVLYPDAVRESAEKGLLRGIAAHHAGCLPLWKSFIEELFQRGLVKVVFATETLAAGINMPARTAVISSLSKKAGNERIELGPNELYQMAGRAGRRGIDEKGYTVLVQTAFEGAEECCKLVFAGVKPLVSQFTASYGMVLNLVAGSKVTRKSSGTEAGKVLQAGRSLEEAKKLVEKSFGNYVSSNVTVAAKQELAEIDNKIEILSSEISDEAIDKKSRKLLSARDYKEITVLKEELREEKRKRAEQRRRMELERFLALKPLLKGMEEGNLPFICLEFKDSEGREQSVPAVYLGHIDSFQGSKLQKMMSLDESFALNLIEDELAADEPGKPNVKPSYYVALGSDNSWYLFTEKWVRTVYRTGFPNIALALGDALPREIMKNLLDKADMQWDKLAESELGSLWRLEGSLETWSWSLNVPVLSSLSDEDEVLHMSEEYDNAAQKYKEQRSKISRLKKKMSRSEGFREYKKILENANLTVEKMKRLKARSRRLINRLEQIEPSGWKDFMRISNVIHESRALDINTHLIFPLGETAAAIRGENELWLAMVLRNKALVDLKPPQLAGVCASLVSEGIKVRPWRDNNYIYEPSDTVVDMVNFLEDQRSSLIKLQEKHEVMIPCCLDVQFSGMVEAWASGLSWKEMMMECAMDEGDLARLLRRTIDLLAQIPKLPDIDPVLQRSAAAAADIMDRPPISELAG.

Residues 1 to 58 (MNTLPVVSLTASSSFKFFHFPSLHRSLSHSPNFSFTKSLILNPNHLSFKSTLNSLSPS) constitute a chloroplast transit peptide. Over residues 53 to 62 (NSLSPSQSQL) the composition is skewed to polar residues. Residues 53-111 (NSLSPSQSQLYEEEDDEEEEEEDEDDDDEAADEYDNISDEIRNSDDDDDDEETEFSVDL) form a disordered region. 2 stretches are compositionally biased toward acidic residues: residues 63–90 (YEEE…DNIS) and 97–107 (DDDDDDEETEF). One can recognise a Helicase ATP-binding domain in the interval 163-327 (IEAFLRGSSV…WIGEIHGKTE (165 aa)). 176 to 183 (APTSSGKT) contacts ATP. A DEVH box motif is present at residues 275–278 (DEVH). Positions 424-620 (QISDTLWHLQ…ASYGMVLNLV (197 aa)) constitute a Helicase C-terminal domain.

The protein belongs to the DExH box helicase family.

The protein localises to the plastid. The protein resides in the chloroplast. It is found in the cytoplasmic granule. The enzyme catalyses ATP + H2O = ADP + phosphate + H(+). Its function is as follows. RNA helicase involved in group II intron splicing. Essential protein required during embryogenesis. Involved in post-transcriptional gene silencing. Modulates the determination of cell fate. Necessary for normal plasmodesmata (PD) development and aperture regulation. This chain is DExH-box ATP-dependent RNA helicase DExH15 chloroplastic (ISE2), found in Arabidopsis thaliana (Mouse-ear cress).